The sequence spans 338 residues: Ketol-acid reductoisomerase (NADP(+)) (338 aa).

The region spanning 1-181 (MKVFYDKDAD…GGGKAGIIET (181 aa)) is the KARI N-terminal Rossmann domain. NADP(+)-binding positions include 24–27 (YGSQ), Arg47, and Ser52. His107 is an active-site residue. Gly133 serves as a coordination point for NADP(+). The KARI C-terminal knotted domain maps to 182-327 (NFREETETDL…EKLRAMMPWI (146 aa)). Mg(2+)-binding residues include Asp190, Glu194, Glu226, and Glu230. Ser251 is a substrate binding site.

Belongs to the ketol-acid reductoisomerase family. The cofactor is Mg(2+).

It catalyses the reaction (2R)-2,3-dihydroxy-3-methylbutanoate + NADP(+) = (2S)-2-acetolactate + NADPH + H(+). The catalysed reaction is (2R,3R)-2,3-dihydroxy-3-methylpentanoate + NADP(+) = (S)-2-ethyl-2-hydroxy-3-oxobutanoate + NADPH + H(+). Its pathway is amino-acid biosynthesis; L-isoleucine biosynthesis; L-isoleucine from 2-oxobutanoate: step 2/4. It functions in the pathway amino-acid biosynthesis; L-valine biosynthesis; L-valine from pyruvate: step 2/4. Its function is as follows. Involved in the biosynthesis of branched-chain amino acids (BCAA). Catalyzes an alkyl-migration followed by a ketol-acid reduction of (S)-2-acetolactate (S2AL) to yield (R)-2,3-dihydroxy-isovalerate. In the isomerase reaction, S2AL is rearranged via a Mg-dependent methyl migration to produce 3-hydroxy-3-methyl-2-ketobutyrate (HMKB). In the reductase reaction, this 2-ketoacid undergoes a metal-dependent reduction by NADPH to yield (R)-2,3-dihydroxy-isovalerate. This is Ketol-acid reductoisomerase (NADP(+)) from Leptothrix cholodnii (strain ATCC 51168 / LMG 8142 / SP-6) (Leptothrix discophora (strain SP-6)).